A 379-amino-acid polypeptide reads, in one-letter code: MIENLISHPHHIKLVGDFFNKKLFSSISTDHPLVILTDVQVAKEILPPIVDFIHSLDYTVVPLSFPSGEKNKTWETFISLQNQLIDHDIPLGSTMIGIGGGVVLDMVGFLASTYCRGIPLFLVPTTMTAMIDACIGGKNGINLRGLKNRLGTFYLPQDVWICPEFLSTLPKKEWLYGISEAIKHGCIADASIWEFLHNYGDMLFSSREILSEFIKRNCLVKAAIVAKDPHDQHLRKILNFGHTIAHAIETLSQGCLPHGLAVSVGMMIETKISLESGIMKNPALLEQLHHLSKRFHLPTTLEELRDLIPQHLHHEFYDPENIIHALGYDKKNLSKKAIRMVMMEDAGKATSCNGIYCTVPKMAILYEILKSECYAMCNN.

Residues 67 to 72 (SGEKNK), 101 to 105 (GVVLD), 125 to 126 (TT), Lys138, and Lys147 contribute to the NAD(+) site. Residues Glu180, His242, and His258 each coordinate Zn(2+).

It belongs to the sugar phosphate cyclases superfamily. Dehydroquinate synthase family. It depends on NAD(+) as a cofactor. Co(2+) is required as a cofactor. Zn(2+) serves as cofactor.

The protein localises to the cytoplasm. It catalyses the reaction 7-phospho-2-dehydro-3-deoxy-D-arabino-heptonate = 3-dehydroquinate + phosphate. It functions in the pathway metabolic intermediate biosynthesis; chorismate biosynthesis; chorismate from D-erythrose 4-phosphate and phosphoenolpyruvate: step 2/7. Its function is as follows. Catalyzes the conversion of 3-deoxy-D-arabino-heptulosonate 7-phosphate (DAHP) to dehydroquinate (DHQ). This is 3-dehydroquinate synthase from Chlamydia abortus (strain DSM 27085 / S26/3) (Chlamydophila abortus).